A 264-amino-acid chain; its full sequence is Zinc import ATP-binding protein ZnuC (264 aa).

The ABC transporter domain occupies 11-226 (IELQNIKVVF…PTFIHLFGDQ (216 aa)). Residue 43–50 (GPNGGGKS) participates in ATP binding.

The protein belongs to the ABC transporter superfamily. Zinc importer (TC 3.A.1.15.5) family. In terms of assembly, the complex is composed of two ATP-binding proteins (ZnuC), two transmembrane proteins (ZnuB) and a solute-binding protein (ZnuA).

The protein localises to the cell inner membrane. The enzyme catalyses Zn(2+)(out) + ATP(in) + H2O(in) = Zn(2+)(in) + ADP(in) + phosphate(in) + H(+)(in). Functionally, part of the ABC transporter complex ZnuABC involved in zinc import. Responsible for energy coupling to the transport system. This chain is Zinc import ATP-binding protein ZnuC, found in Mannheimia succiniciproducens (strain KCTC 0769BP / MBEL55E).